The sequence spans 431 residues: Adenylosuccinate synthetase (431 aa).

GTP is bound by residues 12–18 and 40–42; these read GDEGKGK and GHT. D13 acts as the Proton acceptor in catalysis. Residues D13 and G40 each contribute to the Mg(2+) site. IMP is bound by residues 13–16, 38–41, T129, R143, Q224, T239, and R303; these read DEGK and NAGH. The Proton donor role is filled by H41. Residue 299 to 305 coordinates substrate; the sequence is TVSNRQR. Residues R305, 331–333, and 413–415 contribute to the GTP site; these read KLD and STG.

Belongs to the adenylosuccinate synthetase family. Homodimer. The cofactor is Mg(2+).

It is found in the cytoplasm. It catalyses the reaction IMP + L-aspartate + GTP = N(6)-(1,2-dicarboxyethyl)-AMP + GDP + phosphate + 2 H(+). The protein operates within purine metabolism; AMP biosynthesis via de novo pathway; AMP from IMP: step 1/2. Functionally, plays an important role in the de novo pathway of purine nucleotide biosynthesis. Catalyzes the first committed step in the biosynthesis of AMP from IMP. The protein is Adenylosuccinate synthetase of Ehrlichia canis (strain Jake).